Here is a 122-residue protein sequence, read N- to C-terminus: Nodulation protein NolR (122 aa).

The region spanning 15-109 (EKHEDAEIAA…ALSDIYGDDT (95 aa)) is the HTH arsR-type domain. Positions 49–68 (VGALAHKVGLSQSALSQHLS) form a DNA-binding region, H-T-H motif.

As to quaternary structure, binds to the operator site in homodimeric form.

Its function is as follows. Negative transacting factor controlling the nod regulon. May control the expression of nodD1, nodD2, nodD3 and nodABC genes. The protein is Nodulation protein NolR (nolR) of Rhizobium meliloti (Ensifer meliloti).